Consider the following 495-residue polypeptide: Carotenoid 3,4-desaturase (495 aa).

It belongs to the carotenoid/retinoid oxidoreductase family.

The enzyme catalyses dihydroisopentenyldehydrorhodopin + A = isopentenyldehydrorhodopin + AH2. It catalyses the reaction dihydrobisanhydrobacterioruberin + A = bisanhydrobacterioruberin + AH2. The protein operates within carotenoid biosynthesis. Involved in the biosynthesis of the acyclic C50 carotenoid bacterioruberin (BR). CrtD is involved in the desaturation reactions that form double bonds at C-3,4 of dihydroisopentenyldehydrorhodopin (DH-IDR) and C-3',4' of dihydrobisanhydrobacterioruberin (DH-BABR) to yield isopentenyld ehydrorhodopin (IDR) and bisanhydrobacterioruberin (BABR), respectively. This chain is Carotenoid 3,4-desaturase, found in Haloarcula japonica (strain ATCC 49778 / DSM 6131 / JCM 7785 / NBRC 101032 / NCIMB 13157 / TR-1).